The sequence spans 352 residues: DNA ADP-ribosyl glycohydrolase (352 aa).

The Macro domain occupies 1–155; sequence MITYGSGDLL…IYPPSGGSRA (155 aa). ADP-D-ribose is bound by residues 8 to 9, 20 to 22, 31 to 34, and Thr-79; these read DL, TVN, and IALQ. Residue Lys-80 is the Nucleophile of the active site. 117-121 serves as a coordination point for ADP-D-ribose; it reads GVGNG. Residues 164 to 352 are interaction with DarT; sequence MTWGRAVILE…VALDRILMTA (189 aa).

This sequence belongs to the DarG ADP-ribosyl glycohydrolase family. In terms of assembly, interacts (via C-terminus) with cognate toxin DarT; this heterodimeric complex neutralizes the toxic effect of DarT by preventing ssDNA binding to DarT and consequently inactivating the toxin by direct protein-protein interactions.

The enzyme catalyses an N-(ADP-alpha-D-ribosyl)-thymidine in DNA + H2O = a thymidine in DNA + ADP-D-ribose. Its function is as follows. Antitoxin component of the hybrid type II/IV toxin-antitoxin (TA) system DarTG, which plays a crucial role in controlling bacterial growth and bacteriophage infection. De-ADP-ribosylates DNA (probably) modified on thymidine by its cognate toxin DarT, which neutralizes the activity of cognate toxin DarT. The polypeptide is DNA ADP-ribosyl glycohydrolase (Mycobacterium bovis (strain BCG / Pasteur 1173P2)).